The primary structure comprises 223 residues: Deoxyribose-phosphate aldolase 1 (223 aa).

The active-site Proton donor/acceptor is the D91. K153 acts as the Schiff-base intermediate with acetaldehyde in catalysis. Catalysis depends on K182, which acts as the Proton donor/acceptor.

Belongs to the DeoC/FbaB aldolase family. DeoC type 1 subfamily.

The protein localises to the cytoplasm. It carries out the reaction 2-deoxy-D-ribose 5-phosphate = D-glyceraldehyde 3-phosphate + acetaldehyde. It participates in carbohydrate degradation; 2-deoxy-D-ribose 1-phosphate degradation; D-glyceraldehyde 3-phosphate and acetaldehyde from 2-deoxy-alpha-D-ribose 1-phosphate: step 2/2. Catalyzes a reversible aldol reaction between acetaldehyde and D-glyceraldehyde 3-phosphate to generate 2-deoxy-D-ribose 5-phosphate. This is Deoxyribose-phosphate aldolase 1 from Yersinia pestis.